We begin with the raw amino-acid sequence, 609 residues long: Sodium- and chloride-dependent GABA transporter 2 (609 aa).

Residues 1–13 (MDSRASGTASNGE) show a composition bias toward polar residues. Residues 1 to 23 (MDSRASGTASNGETKPVYPVMEK) form a disordered region. Topologically, residues 1–40 (MDSRASGTASNGETKPVYPVMEKEEEEGTLERGHWNNKME) are cytoplasmic. Transmembrane regions (helical) follow at residues 41-61 (FVLSVAGEIIGLGNVWRFPYL), 68-88 (GAFFIPYLVFLFTCGVPVFLL), and 121-141 (IVILLNVYYIIVLAWALFYLF). At 142–206 (SSFTIDLPWG…GIQHLGALRW (65 aa)) the chain is on the extracellular side. A disulfide bridge connects residues C153 and C162. 2 N-linked (GlcNAc...) asparagine glycosylation sites follow: N169 and N173. The next 2 membrane-spanning stretches (helical) occupy residues 207–227 (ELALCLLLAWVICYFCIWKGV) and 233–253 (VVYFTATFPYLMLVVLLIRGV). Residue N269 is glycosylated (N-linked (GlcNAc...) asparagine). Transmembrane regions (helical) follow at residues 282–302 (AGTQIFFSFAICLGCLTALGS), 319–339 (FLNSGTSFVAGFAIFSILGFM), 366–386 (VVMLPFSPLWACCFFFMVVLL), 418–438 (VLILGVSVVSFLVGLVMLTEG), 453–473 (GMCLLFVAIFESLCVAWVYGA), 490–510 (PLIKYCWLFLTPAVCTATFLF), and 528–548 (WWGDALGWLLALSSMVCIPAW). The Cytoplasmic segment spans residues 549–609 (SLYRLGTLKG…LRLTELESHC (61 aa)). The residue at position 594 (T594) is a Phosphothreonine. The residue at position 598 (S598) is a Phosphoserine.

It belongs to the sodium:neurotransmitter symporter (SNF) (TC 2.A.22) family. SLC6A13 subfamily.

Its subcellular location is the cell membrane. The protein resides in the basolateral cell membrane. It catalyses the reaction 4-aminobutanoate(out) + chloride(out) + 2 Na(+)(out) = 4-aminobutanoate(in) + chloride(in) + 2 Na(+)(in). It carries out the reaction taurine(out) + chloride(out) + 2 Na(+)(out) = taurine(in) + chloride(in) + 2 Na(+)(in). The catalysed reaction is beta-alanine(out) + chloride(out) + 2 Na(+)(out) = beta-alanine(in) + chloride(in) + 2 Na(+)(in). The enzyme catalyses hypotaurine(out) + chloride(out) + 2 Na(+)(out) = hypotaurine(in) + chloride(in) + 2 Na(+)(in). Mediates sodium- and chloride-dependent transport of gamma-aminobutyric acid (GABA). Can also mediate transport of beta-alanine, taurine and hypotaurine. The polypeptide is Sodium- and chloride-dependent GABA transporter 2 (SLC6A13) (Macaca fascicularis (Crab-eating macaque)).